The primary structure comprises 1188 residues: DNA-directed RNA polymerase subunit beta (1188 aa).

This sequence belongs to the RNA polymerase beta chain family. As to quaternary structure, the RNAP catalytic core consists of 2 alpha, 1 beta, 1 beta' and 1 omega subunit. When a sigma factor is associated with the core the holoenzyme is formed, which can initiate transcription.

It catalyses the reaction RNA(n) + a ribonucleoside 5'-triphosphate = RNA(n+1) + diphosphate. In terms of biological role, DNA-dependent RNA polymerase catalyzes the transcription of DNA into RNA using the four ribonucleoside triphosphates as substrates. This Streptococcus equi subsp. equi (strain 4047) protein is DNA-directed RNA polymerase subunit beta.